The sequence spans 357 residues: Ribosomal RNA large subunit methyltransferase M (357 aa).

S-adenosyl-L-methionine contacts are provided by residues S183, 216-219 (APGG), D235, D255, and D271. Catalysis depends on K300, which acts as the Proton acceptor.

Belongs to the class I-like SAM-binding methyltransferase superfamily. RNA methyltransferase RlmE family. RlmM subfamily. Monomer.

The protein localises to the cytoplasm. The enzyme catalyses cytidine(2498) in 23S rRNA + S-adenosyl-L-methionine = 2'-O-methylcytidine(2498) in 23S rRNA + S-adenosyl-L-homocysteine + H(+). In terms of biological role, catalyzes the 2'-O-methylation at nucleotide C2498 in 23S rRNA. In Pseudomonas syringae pv. syringae (strain B728a), this protein is Ribosomal RNA large subunit methyltransferase M.